The following is a 255-amino-acid chain: uncharacterized protein (255 aa).

The N-terminal stretch at 1-28 (MFKLNFKNNYKVLTLLFSLTLSMFVSNA) is a signal peptide. N-linked (GlcNAc...) asparagine glycosylation is found at Asn38, Asn61, and Asn83.

The protein resides in the secreted. This is an uncharacterized protein from Dictyostelium discoideum (Social amoeba).